We begin with the raw amino-acid sequence, 1244 residues long: Mitotic chromosome and X-chromosome-associated protein mix-1 (1244 aa).

32-39 provides a ligand contact to ATP; that stretch reads GYNGSGKS. Positions 247–355 form a coiled coil; the sequence is VKKSAKEIED…AKRKEHEDSK (109 aa). Residues 337–355 show a composition bias toward basic and acidic residues; the sequence is LSKDREVLDAKRKEHEDSK. The interval 337–369 is disordered; the sequence is LSKDREVLDAKRKEHEDSKAANSKDIQSQSDDE. The span at 356-365 shows a compositional bias: polar residues; sequence AANSKDIQSQ. A coiled-coil region spans residues 415–472; sequence ITAAKKRGERLHNQIKHLEGEKATLSARSKSDIGSADNYQKEVDEINKQLQLLGFNID. An SMC hinge domain is found at 526-654; the sequence is DVFGYVAHLI…DSLDVAREIA (129 aa). Coiled coils occupy residues 701–946 and 975–1037; these read PQIE…RKEA and YTVS…IATL. Over residues 919-932 the composition is skewed to basic and acidic residues; that stretch reads AKTKSKREEKEKEL. Residues 919–943 form a disordered region; that stretch reads AKTKSKREEKEKELTSLQQSEASNR. A compositionally biased stretch (basic and acidic residues) spans 1216–1232; sequence DAAAKKGAQKNDKEPPK. Positions 1216-1244 are disordered; the sequence is DAAAKKGAQKNDKEPPKKKPIVVDDDDFE.

Belongs to the SMC family. SMC2 subfamily. Component of the condensin I complex, which contains the mix-1/SMC2 and smc-4/SMC4 heterodimer, and three non SMC subunits that probably regulate the complex: dpy-26, capg-1 and dpy-28. Within the complex, interacts with smc-4, dpy-26, dpy-28 and capg-1. Interaction with smc-4 is required for mitotic chromosome localization. Component of the condensin II complex, which contains the mix-1/SMC2 and smc-4/SMC4 heterodimer, and three non SMC subunits, capg-2, kle-2 and hcp-6 that probably regulate the complex. Within the complex, interacts with smc-4, capg-2, kle-2 and hcp-6. Also a component of the condensin-like dosage compensation complex, which contains the mix-1/SMC2 and dpy-27/SMC4 heterodimer, and three non SMC subunits that probably regulate the complex: dpy-26, capg-1 and dpy-28. Within the complex, interacts with dpy-27, dpy-26, capg-1 and dpy-28. Requires capg-1 for hermaphrodite X chromosome localization. Interacts with smcl-1. Expressed in embryos and in adult somatic and germline tissues (at protein level).

It localises to the nucleus. The protein localises to the chromosome. Its function is as follows. Essential protein required for both chromosome condensation and segregation and X-chromosome dosage compensation depending on its binding partners. Central component of the condensin I complex, a complex required for conversion of interphase chromatin into mitotic-like condense chromosomes. The condensin complex introduces positive supercoils into relaxed DNA in the presence of type I topoisomerases. Converts nicked DNA into positive knotted forms in the presence of type II topoisomerases. Central component of the condensin II complex, a complex that seems to play a role in prophase chromosome condensation and organization. Both the condensin complex I and II play a role in meiotic and mitotic chromosome segregation. Plays a role in robust cytokinesis upon the presence of chromatin obstructions. Also a member of the condensin I-like dosage compensation complex that associates specifically with hermaphrodite X chromosomes to reduce their gene transcription during interphase. In Caenorhabditis elegans, this protein is Mitotic chromosome and X-chromosome-associated protein mix-1 (mix-1).